We begin with the raw amino-acid sequence, 819 residues long: Putative U-box domain-containing protein 53 (819 aa).

2 disordered regions span residues 208–309 (TSDT…NPQF) and 398–433 (KETE…KEKL). A compositionally biased stretch (low complexity) spans 223–237 (ERTSSSCSSGSGANS). Residues 238-260 (DVMSNALKSNPHTLSNKRMQNLP) show a composition bias toward polar residues. Positions 278–296 (DETKKRSSDAAEEASKRSS) are enriched in basic and acidic residues. A compositionally biased stretch (polar residues) spans 297 to 307 (PETSRSVSWNP). The stretch at 395–437 (IAKKETEKFEQKRREEREAAQRREAEMKATHEAKEKEKLEESS) forms a coiled coil. The Protein kinase domain maps to 460–728 (FSEDLKIGMG…DLEDQILPVL (269 aa)). ATP is bound by residues 466-474 (IGMGAYGDV) and lysine 487. The active-site Proton acceptor is the aspartate 582. Residues 748-819 (QPPSHFFCPL…AIVEWRNRNQ (72 aa)) form the U-box domain.

The protein belongs to the protein kinase superfamily. Ser/Thr protein kinase family.

The enzyme catalyses L-seryl-[protein] + ATP = O-phospho-L-seryl-[protein] + ADP + H(+). It carries out the reaction L-threonyl-[protein] + ATP = O-phospho-L-threonyl-[protein] + ADP + H(+). It catalyses the reaction S-ubiquitinyl-[E2 ubiquitin-conjugating enzyme]-L-cysteine + [acceptor protein]-L-lysine = [E2 ubiquitin-conjugating enzyme]-L-cysteine + N(6)-ubiquitinyl-[acceptor protein]-L-lysine.. It participates in protein modification; protein ubiquitination. In terms of biological role, functions as an E3 ubiquitin ligase. This chain is Putative U-box domain-containing protein 53 (PUB53), found in Arabidopsis thaliana (Mouse-ear cress).